The sequence spans 253 residues: Chemokine-binding protein (253 aa).

An N-terminal signal peptide occupies residues 1–17 (MKQYIVLACMCLAAAAM). The interval 62–87 (TEITESESDPEVESEDDSTSVEDVDP) is disordered. Residues 65 to 86 (TESESDPEVESEDDSTSVEDVD) are compositionally biased toward acidic residues.

It belongs to the orthopoxvirus OPG001 family. Binds to host CC chemokines, such as RANTES/CCL5, MIP-1alpha/CCL3, MCP-1/CCL2 and eotaxin.

Its subcellular location is the secreted. Its function is as follows. Inhibits host immune defense by binding to host chemokines. Binds host CC chemokines (beta chemokines) such as RANTES with high affinity, but not CXC or C chemokines (alpha and gamma chemokines). The polypeptide is Chemokine-binding protein (OPG001) (Variola virus (isolate Human/India/Ind3/1967) (VARV)).